The following is a 193-amino-acid chain: dCTP deaminase (193 aa).

DCTP contacts are provided by residues 110–115 (RSSLAR), Asp-128, 136–138 (VLE), Tyr-171, Lys-178, and Gln-182. Glu-138 (proton donor/acceptor) is an active-site residue. The interval 169-193 (RPYNSRQDAKYKGQQGAVASRIDKD) is disordered.

Belongs to the dCTP deaminase family. Homotrimer.

The catalysed reaction is dCTP + H2O + H(+) = dUTP + NH4(+). The protein operates within pyrimidine metabolism; dUMP biosynthesis; dUMP from dCTP (dUTP route): step 1/2. In terms of biological role, catalyzes the deamination of dCTP to dUTP. The sequence is that of dCTP deaminase from Erwinia tasmaniensis (strain DSM 17950 / CFBP 7177 / CIP 109463 / NCPPB 4357 / Et1/99).